The primary structure comprises 215 residues: RNA pyrophosphohydrolase (215 aa).

The Nudix hydrolase domain occupies 6-149 (GFRPNVGIIL…KRDVYQLALT (144 aa)). Positions 38 to 59 (GGIKYGETPMQAMYRELHEETG) match the Nudix box motif.

This sequence belongs to the Nudix hydrolase family. RppH subfamily. It depends on a divalent metal cation as a cofactor.

Functionally, accelerates the degradation of transcripts by removing pyrophosphate from the 5'-end of triphosphorylated RNA, leading to a more labile monophosphorylated state that can stimulate subsequent ribonuclease cleavage. This Burkholderia lata (strain ATCC 17760 / DSM 23089 / LMG 22485 / NCIMB 9086 / R18194 / 383) protein is RNA pyrophosphohydrolase.